The chain runs to 255 residues: Ras-like protein family member 12 (255 aa).

GTP is bound by residues 30 to 37 (GAMGSGKS), 77 to 81 (DTADQ), and 137 to 140 (NKVD).

This sequence belongs to the small GTPase superfamily. Ras family.

The enzyme catalyses GTP + H2O = GDP + phosphate + H(+). The sequence is that of Ras-like protein family member 12 (RASL12) from Danio rerio (Zebrafish).